The sequence spans 251 residues: Regulator of G-protein signaling 9-binding protein B (251 aa).

Residues 1–230 (MPLQNVKVAD…NSKGCCSDGQ (230 aa)) lie on the Cytoplasmic side of the membrane. Coiled-coil stretches lie at residues 52–94 (HLRD…ELER) and 158–187 (ANKASLEYQEIEEEILKVDNMITDMEMKVN). A helical; Anchor for type IV membrane protein membrane pass occupies residues 231 to 250 (LIVFLLLCGTALVAITLYSI). Residue L251 is a topological domain, extracellular.

The protein belongs to the RGS7BP/RGS9BP family.

It is found in the membrane. Regulator of G protein-coupled receptor (GPCR) signaling. Probably acts by regulating the activity of some 'R7' family protein (RGS6, RGS7, RGS9 and/or RGS11). The sequence is that of Regulator of G-protein signaling 9-binding protein B (rgs9bp-b) from Xenopus laevis (African clawed frog).